Consider the following 461-residue polypeptide: DNA polymerase delta subunit 3 (461 aa).

3 disordered regions span residues 148 to 229 (VAQA…SAKG), 249 to 380 (VPGQ…KRVL), and 399 to 461 (YESE…CQKK). Residues 155 to 172 (ARSSSQTPSDTSAVSTPP) show a composition bias toward polar residues. Over residues 205–214 (DANKEPKAKE) the composition is skewed to basic and acidic residues. Low complexity predominate over residues 215-228 (APSVSAASSKPSAK). Positions 279-304 (KPGRKTEPAKIQQKDKKSKMKRMDKS) are enriched in basic and acidic residues. The segment covering 371-380 (GKKRKRKRVL) has biased composition (basic residues). The segment covering 427–436 (VKKEPKEERK) has biased composition (basic and acidic residues). The short motif at 451-458 (QISIMGFC) is the PIP-box element.

Component of both the DNA polymerase delta and DNA polymerase zeta complexes. The tetrameric DNA polymerase delta complex (Pol-delta4), which consists of POLD1/p125, POLD2/p50, POLD3/p66/p68 and POLD4/p12, with POLD1 bearing DNA polymerase and 3' to 5' proofreading exonuclease activities.

The protein resides in the cytoplasm. It is found in the nucleus. Accessory component of both the DNA polymerase delta complex and the DNA polymerase zeta complex. As a component of the trimeric and tetrameric DNA polymerase delta complexes (Pol-delta3 and Pol-delta4, respectively), plays a role in high fidelity genome replication, including in lagging strand synthesis, and repair. Required for optimal Pol-delta activity. Stabilizes the Pol-delta complex and plays a major role in Pol-delta stimulation by PCNA. Pol-delta3 and Pol-delta4 are characterized by the absence or the presence of POLD4. They exhibit differences in catalytic activity. Most notably, Pol-delta3 shows higher proofreading activity than Pol-delta4. Although both Pol-delta3 and Pol-delta4 process Okazaki fragments in vitro, Pol-delta3 may also be better suited to fulfill this task, exhibiting near-absence of strand displacement activity compared to Pol-delta4 and stalling on encounter with the 5'-blocking oligonucleotides. Pol-delta3 idling process may avoid the formation of a gap, while maintaining a nick that can be readily ligated. Along with DNA polymerase kappa, DNA polymerase delta carries out approximately half of nucleotide excision repair (NER) synthesis following UV irradiation. In this context, POLD3, along with PCNA and RFC1-replication factor C complex, is required to recruit POLD1, the catalytic subunit of the polymerase delta complex, to DNA damage sites. Under conditions of DNA replication stress, required for the repair of broken replication forks through break-induced replication (BIR). Involved in the translesion synthesis (TLS) of templates carrying O6-methylguanine or abasic sites performed by Pol-delta4, independently of DNA polymerase zeta (REV3L) or eta (POLH). Facilitates abasic site bypass by DNA polymerase delta by promoting extension from the nucleotide inserted opposite the lesion. Also involved in TLS, as a component of the tetrameric DNA polymerase zeta complex. Along with POLD2, dramatically increases the efficiency and processivity of DNA synthesis of the DNA polymerase zeta complex compared to the minimal zeta complex, consisting of only REV3L and REV7. This is DNA polymerase delta subunit 3 (POLD3) from Gallus gallus (Chicken).